A 262-amino-acid polypeptide reads, in one-letter code: Putative glutamine--fructose-6-phosphate aminotransferase [isomerizing] (262 aa).

Cysteine 2 (nucleophile; for GATase activity) is an active-site residue. Residues 2–262 (CGIFGYCNFL…RKSPPFVHNT (261 aa)) enclose the Glutamine amidotransferase type-2 domain.

The catalysed reaction is D-fructose 6-phosphate + L-glutamine = D-glucosamine 6-phosphate + L-glutamate. The protein operates within nucleotide-sugar biosynthesis; UDP-N-acetyl-alpha-D-glucosamine biosynthesis; alpha-D-glucosamine 6-phosphate from D-fructose 6-phosphate: step 1/1. In terms of biological role, involved in amino sugar synthesis (formation of chitin, supplies the amino sugars of asparagine-linked oligosaccharides of glycoproteins). The chain is Putative glutamine--fructose-6-phosphate aminotransferase [isomerizing] from Saccharomyces cerevisiae (strain ATCC 204508 / S288c) (Baker's yeast).